The primary structure comprises 260 residues: MKFTTAAVLSALVSAEIAFAAPGGNGFARRQARRQARAAGLKASPFRQVNAKEATVESNWGGAILIGSDFDTVSATANVPSASGGSSAAGTAWVGIDGDTCQTAILQTGFDWYGDGTYDAWYEWYPEVSDDFSGITISEGDSIQMSVTATSDTSGSATLENLTTGQKVSKSFSNESSGSLCRTNAEFIIEDFEECNSNGSDCEFVPFASFSPAVEFTDCSVTSDGESVSLDDAQITQVIINNQDVTDCSVSGTTVSCSYV.

A signal peptide spans 1–20 (MKFTTAAVLSALVSAEIAFA). A propeptide spanning residues 21-54 (APGGNGFARRQARRQARAAGLKASPFRQVNAKEA) is cleaved from the precursor. C101 and C181 are disulfide-bonded. E190 acts as the Proton acceptor in catalysis. Cystine bridges form between C195/C219 and C248/C257.

Belongs to the peptidase G1 family. As to quaternary structure, monomer.

The enzyme catalyses Hydrolysis of proteins with broad specificity, cleaving 24-Phe-|-Phe-25, but not 15-Leu-|-Tyr-16 and 25-Phe-|-Tyr-26 in the B chain of insulin.. This is Scytalidopepsin B from Scytalidium lignicola (Hyphomycete).